We begin with the raw amino-acid sequence, 213 residues long: Ribosomal RNA small subunit methyltransferase G (213 aa).

S-adenosyl-L-methionine is bound by residues Gly77, Met82, 104 to 106, and Arg145; that span reads EKS.

Belongs to the methyltransferase superfamily. RNA methyltransferase RsmG family.

The protein resides in the cytoplasm. It carries out the reaction guanosine(527) in 16S rRNA + S-adenosyl-L-methionine = N(7)-methylguanosine(527) in 16S rRNA + S-adenosyl-L-homocysteine. Functionally, specifically methylates the N7 position of guanine in position 527 of 16S rRNA. This is Ribosomal RNA small subunit methyltransferase G from Pelagibacter ubique (strain HTCC1062).